A 229-amino-acid chain; its full sequence is Auxin-responsive protein IAA17 (229 aa).

An EAR-like (transcriptional repression) motif is present at residues 14 to 18 (LCLGL). The 102-residue stretch at 110-211 (AAFVKVSMDG…TCKRLRLMKG (102 aa)) folds into the PB1 domain.

It belongs to the Aux/IAA family. Homodimers and heterodimers. Interacts with the auxin response factors ARF1 and IAA24. Interacts with IAA1. Interacts with TPL. Interacts (via PB1 domain) with ARF7 (via PB1 domain). In terms of processing, phosphorylated by phytochrome A in vitro.

It is found in the nucleus. Functionally, aux/IAA proteins are short-lived transcriptional factors that function as repressors of early auxin response genes at low auxin concentrations. Repression is thought to result from the interaction with auxin response factors (ARFs), proteins that bind to the auxin-responsive promoter element (AuxRE). Formation of heterodimers with ARF proteins may alter their ability to modulate early auxin response genes expression. In Arabidopsis thaliana (Mouse-ear cress), this protein is Auxin-responsive protein IAA17 (IAA17).